The chain runs to 529 residues: DNA polymerase lambda (529 aa).

The BRCT domain occupies 14-109; sequence DPEGMFAGMV…EKANEDLYVL (96 aa). The tract at residues 119-199 is disordered; sequence PKKSLPAISG…ESTSVYKPPD (81 aa). Over residues 153-175 the composition is skewed to polar residues; the sequence is SHSNTQGSPDSPTSCSVPSTSAS. Residues 182 to 193 are compositionally biased toward low complexity; it reads ETPTSPQSESTS. Positions 213-227 are DNA-binding; sequence NIYRALGEDRRSFSY. Residue H260 is part of the active site. The tract at residues 295–298 is DNA-binding; that stretch reads GPAT. DCTP-binding positions include R336, 367–370, and 376–379; these read SYRR and GDLD. Residues 370-379 are involved in primer binding; sequence RGKATCGDLD. D377, D379, and D444 together coordinate Mn(2+). The interval 418-459 is DNA-binding; it reads EEGTDSGVDTYFGLCTYPGQELRRRIDFKVYPRDIYSFGLIA. Residue N467 coordinates dCTP.

Belongs to the DNA polymerase type-X family. In terms of assembly, interacts with the DNA repair proteins XRCC4 and LIG4. Interacts with HSP90-1. Mn(2+) is required as a cofactor.

The protein resides in the nucleus. The catalysed reaction is DNA(n) + a 2'-deoxyribonucleoside 5'-triphosphate = DNA(n+1) + diphosphate. Functionally, repair polymerase involved in base excision repair (BER) and responsible for repair of lesions that give rise to abasic (AP) sites in DNA. Has both DNA polymerase and terminal transferase activities. Has a 5'-deoxyribose-5-phosphate lyase (dRP lyase) activity. Involved in the repair of transposon-induced DNA double strand breaks (DSBs). Involved in repair of UV-B-mediated DNA damage during seedling development through an excision repair mechanism. Involved the repair of DSBs induced by high salinity and DNA cross-linking agent. Functions via the DNA non-homologous end joining (NHEJ) pathway. In Arabidopsis thaliana (Mouse-ear cress), this protein is DNA polymerase lambda.